A 299-amino-acid polypeptide reads, in one-letter code: tRNA dimethylallyltransferase (299 aa).

11–18 (GPTAVGKT) is an ATP binding site. 13 to 18 (TAVGKT) contacts substrate. The segment at 36 to 39 (DSQQ) is interaction with substrate tRNA.

It belongs to the IPP transferase family. As to quaternary structure, monomer. Requires Mg(2+) as cofactor.

It catalyses the reaction adenosine(37) in tRNA + dimethylallyl diphosphate = N(6)-dimethylallyladenosine(37) in tRNA + diphosphate. Catalyzes the transfer of a dimethylallyl group onto the adenine at position 37 in tRNAs that read codons beginning with uridine, leading to the formation of N6-(dimethylallyl)adenosine (i(6)A). The protein is tRNA dimethylallyltransferase of Streptococcus pyogenes serotype M6 (strain ATCC BAA-946 / MGAS10394).